Here is a 107-residue protein sequence, read N- to C-terminus: Small ribosomal subunit protein eS25 (107 aa).

Residues 1-35 (MPPKQQLSKAAKAAAAMAGGKKSKKKWSKKSHKDK) form a disordered region. The segment covering 8 to 20 (SKAAKAAAAMAGG) has biased composition (low complexity). Residues 21 to 35 (KKSKKKWSKKSHKDK) show a composition bias toward basic residues.

It belongs to the eukaryotic ribosomal protein eS25 family.

The polypeptide is Small ribosomal subunit protein eS25 (RPS25) (Candida glabrata (strain ATCC 2001 / BCRC 20586 / JCM 3761 / NBRC 0622 / NRRL Y-65 / CBS 138) (Yeast)).